We begin with the raw amino-acid sequence, 90 residues long: Bombyxin B-9 (90 aa).

The first 20 residues, 1-20, serve as a signal peptide directing secretion; that stretch reads MMKTAVMFILVVVISLTYSS. 3 cysteine pairs are disulfide-bonded: C30-C75, C42-C88, and C74-C79. A propeptide spans 49 to 64 (c peptide like); the sequence is GGAQYAPYWQETYLRS.

Belongs to the insulin family. As to quaternary structure, heterodimer of a B chain and an A chain linked by two disulfide bonds.

It is found in the secreted. Functionally, brain peptide responsible for activation of prothoracic glands to produce ecdysone in insects. The chain is Bombyxin B-9 (BBXB9) from Bombyx mori (Silk moth).